Here is a 228-residue protein sequence, read N- to C-terminus: Protein CWC15 homolog A (228 aa).

The tract at residues 1 to 126 (MTTAARPTFE…DEDSDDDTAA (126 aa)) is disordered. Residues 24 to 34 (SQLSKQYSSRD) are compositionally biased toward polar residues. Residues 52-84 (EEVRSRDFRRELEERERVVARDKNRDRPTREHT) are compositionally biased toward basic and acidic residues. The span at 102–124 (DADDPLTDEDGDEDSDEDSDDDT) shows a compositional bias: acidic residues. Positions 121–165 (DDDTAALLAELEKIKKERAEEKDRKELEQKAEEERIRMENILSGN) form a coiled coil.

Belongs to the CWC15 family. Identified in the spliceosome C complex. Component of the minor spliceosome, which splices U12-type introns.

It localises to the nucleus. Functionally, involved in pre-mRNA splicing as component of the spliceosome. This Xenopus laevis (African clawed frog) protein is Protein CWC15 homolog A (cwc15-a).